Reading from the N-terminus, the 142-residue chain is Large ribosomal subunit protein uL11 (142 aa).

This sequence belongs to the universal ribosomal protein uL11 family. Part of the ribosomal stalk of the 50S ribosomal subunit. Interacts with L10 and the large rRNA to form the base of the stalk. L10 forms an elongated spine to which L12 dimers bind in a sequential fashion forming a multimeric L10(L12)X complex. In terms of processing, one or more lysine residues are methylated.

In terms of biological role, forms part of the ribosomal stalk which helps the ribosome interact with GTP-bound translation factors. The sequence is that of Large ribosomal subunit protein uL11 from Bradyrhizobium sp. (strain BTAi1 / ATCC BAA-1182).